Reading from the N-terminus, the 206-residue chain is Imidazoleglycerol-phosphate dehydratase (206 aa).

Positions 1 to 21 (MTTPSTAPTPAPRKAEVSRNT) are disordered.

Belongs to the imidazoleglycerol-phosphate dehydratase family.

It is found in the cytoplasm. The catalysed reaction is D-erythro-1-(imidazol-4-yl)glycerol 3-phosphate = 3-(imidazol-4-yl)-2-oxopropyl phosphate + H2O. It participates in amino-acid biosynthesis; L-histidine biosynthesis; L-histidine from 5-phospho-alpha-D-ribose 1-diphosphate: step 6/9. This is Imidazoleglycerol-phosphate dehydratase from Polaromonas sp. (strain JS666 / ATCC BAA-500).